A 286-amino-acid chain; its full sequence is MNAYLLAALLGVVEGLTEFLPVSSTAHLRICEALLHIDLGDGFWKMFSIVIQLGAILCLPIYFRARISEFFATFPKGKSGNHTALTHPLTLTIIAFLCTAIPAFLFTKIIGKHLESVIIMGSALLIGGIVMWIVDVMFADKGATDDMDKMSVGQAIWIGLCQVLSAVFPGTSRSMSTIAAGQLSGMTRAAALEFSFFLSIPTMVVATCYDLLKTLRHKDEAGAALGVVHMDAHAWITLAIGFIVSFIVAYFVVAWFMKWVRTRGFVPFAVYRIVVGIAVLAWALKR.

A run of 7 helical transmembrane segments spans residues 43–63 (FWKMFSIVIQLGAILCLPIYF), 91–111 (LTIIAFLCTAIPAFLFTKIIG), 118–138 (IIMGSALLIGGIVMWIVDVMF), 150–170 (MSVGQAIWIGLCQVLSAVFPG), 189–209 (AAALEFSFFLSIPTMVVATCY), 236–256 (ITLAIGFIVSFIVAYFVVAWF), and 264–284 (GFVPFAVYRIVVGIAVLAWAL).

It belongs to the UppP family.

The protein localises to the cell inner membrane. It carries out the reaction di-trans,octa-cis-undecaprenyl diphosphate + H2O = di-trans,octa-cis-undecaprenyl phosphate + phosphate + H(+). Functionally, catalyzes the dephosphorylation of undecaprenyl diphosphate (UPP). Confers resistance to bacitracin. The polypeptide is Undecaprenyl-diphosphatase (Koribacter versatilis (strain Ellin345)).